We begin with the raw amino-acid sequence, 194 residues long: MSFAEKITGLLARPNQQDPIGPEQPWYLKYGSRLLGIVAAFFAILFGLWNVFSILTLNVSCLVAGIIQMVAGFVVMLLEAPCCFVCFEQVNVIADKVDSKPLYFRAGLYIAMAIPPIILCFGLASLFGSGLILGTGVVYGMMALGKKASADDMRAAAQQTFGGNTPAQTNDRAGIVNNAQPFSFTGAVGTDSNV.

The next 3 membrane-spanning stretches (helical) occupy residues 34-54 (LLGI…VFSI), 59-79 (VSCL…MLLE), and 107-127 (GLYI…ASLF).

The protein belongs to the calcium channel flower family. Homomultimer. Associates with the dally/ magu complex.

It localises to the cell membrane. Its subcellular location is the cytoplasmic vesicle. The protein resides in the secretory vesicle. It is found in the synaptic vesicle membrane. The protein localises to the presynaptic cell membrane. It localises to the endosome. Its activity is regulated as follows. Channel activity is inhibited by La(3+), which reduces Ca(2+) influx and thus inhibits it's function in promoting activity-dependent bulk endocytosis (ADBE) in response to high stimuli. Its function is as follows. Transmembrane protein which mediates synaptic endocytosis, fitness-based cell culling, neuronal culling, morphogen gradient scaling, and calcium transport. Regulates synaptic endocytosis and hence couples exo- with endocytosis. Controls two major modes of synaptic vesicle (SV) endocytosis in the synaptic boutons of neuromuscular junctions (NMJs); Ca(2+) channel-independent Clathrin-mediated endocytosis (CME) in response to mild stimulation, and Ca(2+) channel-dependent activity-dependent bulk endocytosis (ADBE) in response to strong stimulation. Functions in ADBE and subsequent SV reformation from bulk endosomes by initiating Ca(2+) channel-dependent phosphatidylinositol 4,5-bisphosphate (PtdIns(4,5)P2) compartmentalization in synaptic boutons. There it acts at the periactive zone to provide the low Ca(2+) levels required to initiate Calcineurin activation and upregulate PtdIns(4,5)P2. Conversely PtdIns(4,5)P2 enhances fwe Ca(2+) channel-activity, establishing a positive feedback loop that induces PtdIns(4,5)P2 microdomain at the periactive zone. These microdomains trigger bulk membrane invagination (i.e. ADBE) by triggering actin polymerization while also promoting localization of fwe to bulk endosomes, thereby removing the ADBE trigger to reduce endocytosis and prevent excess membrane uptake. PtdIns(4,5)P2 then promotes SV reformation from the bulk endosomes, to coordinate ADBE and subsequent SV reformation. Different combinations of the flower isoforms at the cell membrane are also required for the identification and elimination of suboptimal or supernumerary cells during development, regeneration, and adulthood. Required for the recognition and elimination of unfit cells in the developing wing during cell competition. In the developing pupal retina, mediates the elimination of unwanted postmitotic neurons, including supernumerary photoreceptor neurons that form at the periphery of the retina and are contained within incomplete ommatidia units. Also required for efficient elimination and replacement of old neurons by newly generated neurons during regeneration in the adult brain following mechanical injury. Downstream of the flower fitness fingerprints, cells identified as unwanted or unfit are eliminated via apoptosis through the expression of ahuizotl (azot). However, the cells marked for elimination by the flower isoforms only undergo apoptosis if additional thresholds are met; (1) their neighboring fit/healthy cells express different levels of the fwe isoforms, and (2) the levels of the protective signal SPARC expressed by the loser or unwanted cells are unable to inhibit caspase activation. These additional thresholds for flower-mediated apoptosis, allows useful cells to recover from transient and limited stress before they are unnecessarily eliminated. Functions with dally and magu in a mechanism of scaling, which utilises apoptosis to ensure that the dpp morphogen gradient, which mediates organ growth, remains proportional to the size of the growing wing. In this mechanism, fwe represses dally- and Magu-dependent activity in expanding the gradient, and dally/Magu inhibits fwe-dependent apoptosis to keep cell death rate low. When the levels of these different proteins are optimally regulated the gradient correctly scales with organ growth but when this fails, fwe-mediated apoptosis is activated to trim the developing tissue to match the correct size of the gradient. This chain is Calcium channel flower, found in Drosophila erecta (Fruit fly).